Here is a 207-residue protein sequence, read N- to C-terminus: Negative modulator of initiation of replication (207 aa).

The span at 43-54 (ATPITSSVTPSA) shows a compositional bias: polar residues. A disordered region spans residues 43–63 (ATPITSSVTPSAPRQEAVNDE).

This sequence belongs to the SeqA family. Homodimer. Polymerizes to form helical filaments.

The protein localises to the cytoplasm. In terms of biological role, negative regulator of replication initiation, which contributes to regulation of DNA replication and ensures that replication initiation occurs exactly once per chromosome per cell cycle. Binds to pairs of hemimethylated GATC sequences in the oriC region, thus preventing assembly of replication proteins and re-initiation at newly replicated origins. Repression is relieved when the region becomes fully methylated. The sequence is that of Negative modulator of initiation of replication from Psychromonas ingrahamii (strain DSM 17664 / CCUG 51855 / 37).